Here is a 290-residue protein sequence, read N- to C-terminus: Nucleoid occlusion protein (290 aa).

Residues 153–172 (EALAQRLGKGQSTVANKLRL) constitute a DNA-binding region (H-T-H motif).

The protein belongs to the ParB family.

It localises to the cytoplasm. The protein localises to the nucleoid. Functionally, effects nucleoid occlusion by binding relatively nonspecifically to DNA and preventing the assembly of the division machinery in the vicinity of the nucleoid, especially under conditions that disturb the cell cycle. It helps to coordinate cell division and chromosome segregation by preventing the formation of the Z ring through the nucleoid, which would cause chromosome breakage. The chain is Nucleoid occlusion protein from Bacillus mycoides (strain KBAB4) (Bacillus weihenstephanensis).